A 348-amino-acid polypeptide reads, in one-letter code: Arginine kinase Oct f 2 (348 aa).

In terms of domain architecture, Phosphagen kinase N-terminal spans 1 to 83; that stretch reads MAEELFKTLQ…LDAVIMDYHK (83 aa). 56–60 provides a ligand contact to substrate; sequence GVGIY. Positions 111–347 constitute a Phosphagen kinase C-terminal domain; the sequence is MIVSTRVRVG…NEIIREETNS (237 aa). ATP is bound by residues 114 to 118 and His177; that span reads STRVR. Substrate is bound at residue Glu217. Arg221 lines the ATP pocket. Cys263 lines the substrate pocket. Residues 272–276 and 300–305 each bind ATP; these read RASVH and RGIHGE. Glu305 is a substrate binding site.

The protein belongs to the ATP:guanido phosphotransferase family. Muscle (at protein level).

The catalysed reaction is L-arginine + ATP = N(omega)-phospho-L-arginine + ADP + H(+). Catalyzes the reversible transfer of high energy ATP gamma-phosphate group to L-arginine. The polypeptide is Arginine kinase Oct f 2 (Amphioctopus fangsiao (Ocellated octopus)).